The primary structure comprises 176 residues: Inner membrane-spanning protein YciB (176 aa).

The next 5 helical transmembrane spans lie at 23–43, 50–70, 74–94, 119–139, and 150–170; these read MIAA…FLYW, TMQW…IVLG, FIMW…LGSH, LTYM…FVFT, and MFGS…YLST.

This sequence belongs to the YciB family.

Its subcellular location is the cell inner membrane. Its function is as follows. Plays a role in cell envelope biogenesis, maintenance of cell envelope integrity and membrane homeostasis. This Neisseria gonorrhoeae (strain ATCC 700825 / FA 1090) protein is Inner membrane-spanning protein YciB.